An 801-amino-acid polypeptide reads, in one-letter code: Probable methionine--tRNA ligase (801 aa).

A 'HIGH' region motif is present at residues proline 25–asparagine 35. Positions lysine 347 to serine 351 match the 'KMSKS' region motif. Residue lysine 350 participates in ATP binding. Positions aspartate 606–asparagine 633 are disordered. In terms of domain architecture, tRNA-binding spans threonine 639–threonine 742.

This sequence belongs to the class-I aminoacyl-tRNA synthetase family.

The protein localises to the cytoplasm. The enzyme catalyses tRNA(Met) + L-methionine + ATP = L-methionyl-tRNA(Met) + AMP + diphosphate. The sequence is that of Probable methionine--tRNA ligase from Oryza sativa subsp. japonica (Rice).